The sequence spans 396 residues: L-lactate dehydrogenase (396 aa).

Residues 1 to 380 (MIISAASDYR…TQDSLVQGLG (380 aa)) form the FMN hydroxy acid dehydrogenase domain. Residue Tyr24 participates in substrate binding. The FMN site is built by Ser106 and Gln127. Residue Tyr129 coordinates substrate. Residue Thr155 participates in FMN binding. Arg164 provides a ligand contact to substrate. Lys251 contributes to the FMN binding site. His275 serves as the catalytic Proton acceptor. Arg278 serves as a coordination point for substrate. 306–330 (DSGIRNGLDVVRMIALGADTVLLGR) contributes to the FMN binding site.

Belongs to the FMN-dependent alpha-hydroxy acid dehydrogenase family. FMN serves as cofactor.

Its subcellular location is the cell inner membrane. It carries out the reaction (S)-lactate + A = pyruvate + AH2. Its function is as follows. Catalyzes the conversion of L-lactate to pyruvate. Is coupled to the respiratory chain. The protein is L-lactate dehydrogenase of Shigella dysenteriae serotype 1 (strain Sd197).